The following is a 113-amino-acid chain: ATP-dependent Clp protease adapter protein ClpS (113 aa).

This sequence belongs to the ClpS family. Binds to the N-terminal domain of the chaperone ClpA.

Its function is as follows. Involved in the modulation of the specificity of the ClpAP-mediated ATP-dependent protein degradation. This Leptospira biflexa serovar Patoc (strain Patoc 1 / Ames) protein is ATP-dependent Clp protease adapter protein ClpS.